We begin with the raw amino-acid sequence, 598 residues long: Dihydroxy-acid dehydratase astD, mitochondrial (598 aa).

A mitochondrion-targeting transit peptide spans 1–111; it reads MFASRIRSRA…HRAGLVPMRF (111 aa). The interval 23 to 50 is disordered; sequence RLPASTTGRRYKSDETLNRVSSKITQPK. A compositionally biased stretch (polar residues) spans 40 to 50; sequence NRVSSKITQPK. A [2Fe-2S] cluster-binding site is contributed by Cys-86. Residue Asp-118 coordinates Mg(2+). Cys-159 lines the [2Fe-2S] cluster pocket. Asp-160 provides a ligand contact to Mg(2+). Cys-232 lines the [2Fe-2S] cluster pocket. Residue Glu-485 coordinates Mg(2+). Ser-511 (proton acceptor) is an active-site residue.

It belongs to the IlvD/Edd family. It depends on [2Fe-2S] cluster as a cofactor. The cofactor is Mg(2+).

The protein resides in the mitochondrion. It catalyses the reaction (2R)-2,3-dihydroxy-3-methylbutanoate = 3-methyl-2-oxobutanoate + H2O. It carries out the reaction (2R,3R)-2,3-dihydroxy-3-methylpentanoate = (S)-3-methyl-2-oxopentanoate + H2O. It participates in amino-acid biosynthesis; L-isoleucine biosynthesis; L-isoleucine from 2-oxobutanoate: step 3/4. It functions in the pathway amino-acid biosynthesis; L-valine biosynthesis; L-valine from pyruvate: step 3/4. Its activity is regulated as follows. DHAD activity is not inhibited by the dihydroxyacid dehydratase inhibitor aspterric acid (AA). Dihydroxyacid dehydratase; part of the gene cluster that mediates the biosynthesis of the sesquiterpenoid aspterric acid (AA), an inhibitor of dihydroxy-acid dehydratase (DHAD) effective as an herbicide. Performs the third step in the common pathway leading to biosynthesis of branched-chain amino acids. Catalyzes the dehydration of (2R,3R)-2,3-dihydroxy-3-methylpentanoate (2,3-dihydroxy-3-methylvalerate) into 2-oxo-3-methylpentanoate (2-oxo-3-methylvalerate) and of (2R)-2,3-dihydroxy-3-methylbutanoate (2,3-dihydroxyisovalerate) into 2-oxo-3-methylbutanoate (2-oxoisovalerate), the penultimate precursor to L-isoleucine and L-valine, respectively. AstD confers self-resistance in the presence of the dihydroxyacid dehydratase inhibitor aspterric acid (AA) produced by the ast cluster. The protein is Dihydroxy-acid dehydratase astD, mitochondrial of Aspergillus terreus (strain NIH 2624 / FGSC A1156).